A 237-amino-acid polypeptide reads, in one-letter code: Flagellar brake protein YcgR (237 aa).

The region spanning 108 to 225 is the PilZ domain; the sequence is QRRRQFRVTT…MERKIQSAVF (118 aa).

This sequence belongs to the YcgR family. As to quaternary structure, monomer. Interacts with the flagellar basal bodies.

The protein resides in the bacterial flagellum basal body. Acts as a flagellar brake, regulating swimming and swarming in a bis-(3'-5') cyclic diguanylic acid (c-di-GMP)-dependent manner. Binds 1 c-di-GMP dimer per subunit. Increasing levels of c-di-GMP lead to decreased motility. The protein is Flagellar brake protein YcgR of Serratia proteamaculans (strain 568).